Reading from the N-terminus, the 447-residue chain is Secretin receptor (447 aa).

An N-terminal signal peptide occupies residues 1-28 (MLSTMSPRLSLLLLWLLLLINAAHPVGA). Topologically, residues 29 to 140 (LPRLCDVRRV…NERRHAYLLK (112 aa)) are extracellular. Disulfide bonds link C46/C74, C65/C106, and C88/C122. N-linked (GlcNAc...) asparagine glycans are attached at residues N71, N99, N105, and N127. The chain crosses the membrane as a helical span at residues 141–166 (LKVMYTVGYSSSLAMLLVALSILCSF). The Cytoplasmic segment spans residues 167–173 (RRLHCTR). A helical transmembrane segment spans residues 174 to 194 (NYIHMHLFVSFILRALSNFIK). Over 195-215 (DAVLFPADDVTYCDAHRAGCK) the chain is Extracellular. An intrachain disulfide couples C214 to C284. A helical membrane pass occupies residues 216–238 (LVMIFFQYCIMANYAWLLVEGLY). Residues 239–253 (LHTLLAISFFSERKC) are Cytoplasmic-facing. The chain crosses the membrane as a helical span at residues 254-275 (LQAFVLFGWGSPAIFVALWAVT). The Extracellular portion of the chain corresponds to 276-290 (RHFLEDFGCWDINSN). N290 is a glycosylation site (N-linked (GlcNAc...) asparagine). Residues 291–314 (ASIWWVIRGPVILSIVINFIFFIN) traverse the membrane as a helical segment. Over 315 to 339 (ILRILMRKLRTQETRGNETHHYKRL) the chain is Cytoplasmic. Residues 340–355 (AKSTLLLIPLFGIHYI) form a helical membrane-spanning segment. Topologically, residues 356 to 366 (VFAFSPEGAME) are extracellular. A helical transmembrane segment spans residues 367-390 (VQLFFELALGSFQGLVVAVLYCFL). The Cytoplasmic portion of the chain corresponds to 391–447 (NGELEVQKKWRQWHLQEFPLRPVALSNSFSNATNGPTHSTKAGTSEQSRSIPGANVI). A compositionally biased stretch (polar residues) spans 423–440 (TNGPTHSTKAGTSEQSRS). Residues 423–447 (TNGPTHSTKAGTSEQSRSIPGANVI) are disordered.

This sequence belongs to the G-protein coupled receptor 2 family. In terms of processing, phosphorylated on Ser and Thr residues at the cytoplasmic C-terminus by G protein-coupled receptor kinases (GRKs). As to expression, in brain, expressed in the hippocampal CA1 region, the lower layer of cerebral cortex, the anterior olfactory nuclei, the anterior ventrolateral thalamus, the lateral region of hypothalamus, substantia nigra, tegmental area and central nucleus of the inferior colliculus, the ventral supramamillary nucleus and the cerebellum. Expressed in brown adipocytes: expression predominates in mature brown adipocytes (at protein level). Detected in the renal medulla, where it localized predominantly on the basolateral membranes of cells in the collecting ducts (blue arrow) and the ascending thick segments of the loop of Henle.

The protein resides in the cell membrane. It localises to the basolateral cell membrane. In terms of biological role, g protein-coupled receptor activated by secretin (SCT), which is involved in different processes such as regulation of the pH of the duodenal content, food intake and water homeostasis. Ligand binding causes a conformation change that triggers signaling via guanine nucleotide-binding proteins (G proteins) and activates cAMP-dependent pathway. Upon binding to secretin, regulates the pH of the duodenum by (1) inhibiting the secretion of gastric acid from the parietal cells of the stomach and (2) stimulating the production of bicarbonate (NaHCO(3)) from the ductal cells of the pancreas. In addition to regulating the pH of the duodenal content, plays a central role in diet induced thermogenesis: acts as a non-sympathetic brown fat (BAT) activator mediating prandial thermogenesis, which consequentially induces satiation. Mechanistically, secretin released by the gut after a meal binds to secretin receptor (SCTR) in brown adipocytes, activating brown fat thermogenesis by stimulating lipolysis, which is sensed in the brain and promotes satiation. Also able to stimulate lipolysis in white adipocytes. Also plays an important role in cellular osmoregulation by regulating renal water reabsorption. Also plays a role in the central nervous system: required for synaptic plasticity. This chain is Secretin receptor, found in Mus musculus (Mouse).